Here is a 444-residue protein sequence, read N- to C-terminus: Serine--tRNA ligase (444 aa).

An L-serine-binding site is contributed by 249 to 251; that stretch reads TAE. ATP is bound by residues 280–282 and valine 296; that span reads RRE. Position 303 (glutamate 303) interacts with L-serine. 367–370 contacts ATP; it reads EIVS. L-serine is bound at residue threonine 401.

The protein belongs to the class-II aminoacyl-tRNA synthetase family. Type-1 seryl-tRNA synthetase subfamily. As to quaternary structure, homodimer. The tRNA molecule binds across the dimer.

Its subcellular location is the cytoplasm. It carries out the reaction tRNA(Ser) + L-serine + ATP = L-seryl-tRNA(Ser) + AMP + diphosphate + H(+). It catalyses the reaction tRNA(Sec) + L-serine + ATP = L-seryl-tRNA(Sec) + AMP + diphosphate + H(+). It functions in the pathway aminoacyl-tRNA biosynthesis; selenocysteinyl-tRNA(Sec) biosynthesis; L-seryl-tRNA(Sec) from L-serine and tRNA(Sec): step 1/1. Catalyzes the attachment of serine to tRNA(Ser). Is also able to aminoacylate tRNA(Sec) with serine, to form the misacylated tRNA L-seryl-tRNA(Sec), which will be further converted into selenocysteinyl-tRNA(Sec). The polypeptide is Serine--tRNA ligase (Picrophilus torridus (strain ATCC 700027 / DSM 9790 / JCM 10055 / NBRC 100828 / KAW 2/3)).